Consider the following 450-residue polypeptide: tRNA modification GTPase MnmE (450 aa).

Arginine 23, glutamate 79, and lysine 118 together coordinate (6S)-5-formyl-5,6,7,8-tetrahydrofolate. Residues glycine 214–glycine 374 form the TrmE-type G domain. Asparagine 224 serves as a coordination point for K(+). GTP-binding positions include asparagine 224–serine 229, threonine 243–threonine 249, and aspartate 268–glycine 271. Serine 228 contributes to the Mg(2+) binding site. Positions 243, 245, and 248 each coordinate K(+). Threonine 249 is a binding site for Mg(2+). Lysine 450 lines the (6S)-5-formyl-5,6,7,8-tetrahydrofolate pocket.

This sequence belongs to the TRAFAC class TrmE-Era-EngA-EngB-Septin-like GTPase superfamily. TrmE GTPase family. As to quaternary structure, homodimer. Heterotetramer of two MnmE and two MnmG subunits. Requires K(+) as cofactor.

It is found in the cytoplasm. Exhibits a very high intrinsic GTPase hydrolysis rate. Involved in the addition of a carboxymethylaminomethyl (cmnm) group at the wobble position (U34) of certain tRNAs, forming tRNA-cmnm(5)s(2)U34. The chain is tRNA modification GTPase MnmE from Francisella tularensis subsp. holarctica (strain FTNF002-00 / FTA).